Reading from the N-terminus, the 403-residue chain is D-mannonate dehydratase Caul1427 (403 aa).

Residues Asn38 and His123 each contribute to the substrate site. Tyr160 (proton donor/acceptor) is an active-site residue. Mg(2+) is bound at residue Asp211. Residue His213 is the Proton donor/acceptor of the active site. Residues Glu237 and Glu263 each contribute to the Mg(2+) site. Residues Glu263, Arg284, His313, Asp317, and Glu340 each coordinate substrate.

It belongs to the mandelate racemase/muconate lactonizing enzyme family. GalD subfamily. It depends on Mg(2+) as a cofactor.

The enzyme catalyses D-mannonate = 2-dehydro-3-deoxy-D-gluconate + H2O. The protein operates within carbohydrate metabolism; pentose and glucuronate interconversion. Functionally, catalyzes the dehydration of D-mannonate. Has no detectable activity with a panel of 70 other acid sugars (in vitro). This is D-mannonate dehydratase Caul1427 from Caulobacter sp. (strain K31).